Reading from the N-terminus, the 118-residue chain is Large ribosomal subunit protein uL24 (118 aa).

Belongs to the universal ribosomal protein uL24 family. In terms of assembly, part of the 50S ribosomal subunit.

In terms of biological role, one of two assembly initiator proteins, it binds directly to the 5'-end of the 23S rRNA, where it nucleates assembly of the 50S subunit. Functionally, one of the proteins that surrounds the polypeptide exit tunnel on the outside of the subunit. In Prochlorococcus marinus (strain SARG / CCMP1375 / SS120), this protein is Large ribosomal subunit protein uL24.